The following is a 257-amino-acid chain: GTP cyclohydrolase FolE2 (257 aa).

It belongs to the GTP cyclohydrolase IV family.

The enzyme catalyses GTP + H2O = 7,8-dihydroneopterin 3'-triphosphate + formate + H(+). It functions in the pathway cofactor biosynthesis; 7,8-dihydroneopterin triphosphate biosynthesis; 7,8-dihydroneopterin triphosphate from GTP: step 1/1. Functionally, converts GTP to 7,8-dihydroneopterin triphosphate. The chain is GTP cyclohydrolase FolE2 from Dictyoglomus thermophilum (strain ATCC 35947 / DSM 3960 / H-6-12).